A 440-amino-acid chain; its full sequence is Streptokinase C (440 aa).

The N-terminal stretch at 1 to 26 is a signal peptide; that stretch reads MKNYLSFGMFALLFALTFGTVNSVQA.

This protein is not a protease, but it activates plasminogen by complexing with it. As a potential virulence factor, it is thought to prevent the formation of effective fibrin barriers around the site of infection, thereby contributing to the invasiveness of the cells. This Streptococcus dysgalactiae subsp. equisimilis (Streptococcus equisimilis) protein is Streptokinase C (skc).